Consider the following 260-residue polypeptide: GDSL esterase/lipase WDL1 (260 aa).

Residues 1–35 form the signal peptide; sequence MLGFAPAPGRPLFVLFGSSIVQFSFSNGGWGAALA. Catalysis depends on serine 18, which acts as the Nucleophile. Asparagine 83 and asparagine 150 each carry an N-linked (GlcNAc...) asparagine glycan. Residues aspartate 191 and histidine 194 contribute to the active site.

The protein belongs to the 'GDSL' lipolytic enzyme family. Highly expressed in panicles. Expressed in shoots, mature flowers and seeds.

It localises to the endoplasmic reticulum. Its function is as follows. Involved in the organization of leaf cuticle and wax crystals. This is GDSL esterase/lipase WDL1 from Oryza sativa subsp. japonica (Rice).